The chain runs to 193 residues: dCTP deaminase (193 aa).

DCTP contacts are provided by residues 110–115 (RSSLAR), D128, 136–138 (VLE), Y171, K178, and Q182. E138 (proton donor/acceptor) is an active-site residue. A disordered region spans residues 169 to 193 (RPYNRRQDAKYRDQQGAVASRIDKD).

The protein belongs to the dCTP deaminase family. Homotrimer.

It carries out the reaction dCTP + H2O + H(+) = dUTP + NH4(+). The protein operates within pyrimidine metabolism; dUMP biosynthesis; dUMP from dCTP (dUTP route): step 1/2. Catalyzes the deamination of dCTP to dUTP. The protein is dCTP deaminase of Salmonella paratyphi B (strain ATCC BAA-1250 / SPB7).